The sequence spans 122 residues: Large ribosomal subunit protein uL14 (122 aa).

This sequence belongs to the universal ribosomal protein uL14 family. Part of the 50S ribosomal subunit. Forms a cluster with proteins L3 and L19. In the 70S ribosome, L14 and L19 interact and together make contacts with the 16S rRNA in bridges B5 and B8.

Functionally, binds to 23S rRNA. Forms part of two intersubunit bridges in the 70S ribosome. This chain is Large ribosomal subunit protein uL14, found in Alkaliphilus oremlandii (strain OhILAs) (Clostridium oremlandii (strain OhILAs)).